Here is a 5054-residue protein sequence, read N- to C-terminus: Malformin synthetase mlfA (5054 aa).

The adenylation 1 stretch occupies residues 194–585 (ERRAANRPHS…CGRADTQVKL (392 aa)). Positions 723 to 799 (LGLSQLEQEI…EASSLAEVQE (77 aa)) constitute a Carrier 1 domain. Position 760 is an O-(pantetheine 4'-phosphoryl)serine (Ser-760). The segment at 837–1268 (EDVFPCTTMQ…ALNTLTLLQA (432 aa)) is condensation 1. An adenylation 2 region spans residues 1296–1685 (DRWVTRQPES…GRKDTQVKLR (390 aa)). The Carrier 2 domain occupies 1823-1900 (TASSKLELTL…QLAAILGEAT (78 aa)). An O-(pantetheine 4'-phosphoryl)serine modification is found at Ser-1860. Disordered regions lie at residues 1899–1929 (ATGQ…NDGV) and 1964–1994 (GSSS…VSPV). Composition is skewed to low complexity over residues 1904–1927 (ESSA…STND) and 1965–1981 (SSSC…SSSS). Positions 2033 to 2448 (EDIYPATALQ…GVSYRDKQTL (416 aa)) are condensation 2. The tract at residues 2471–2863 (VRTPHAPAVF…IGRRDGQLKL (393 aa)) is adenylation 3. The 77-residue stretch at 2999–3075 (RPATAQEREM…QLMRHLSANG (77 aa)) folds into the Carrier 3 domain. An O-(pantetheine 4'-phosphoryl)serine modification is found at Ser-3036. 2 condensation regions span residues 3092–3557 (WVPL…TYDQ) and 3578–3997 (DIYP…EQLV). The interval 4022–4412 (HSSREAACAW…VGRKDNQIKF (391 aa)) is adenylation 4. Residues 4546–4622 (MPFTAAECKM…DLAYRTANLV (77 aa)) form the Carrier 4 domain. At Ser-4583 the chain carries O-(pantetheine 4'-phosphoryl)serine. Residues 4659-4972 (EVLPTTSFQR…LQTIVQHQNN (314 aa)) are condensation 5.

The protein belongs to the NRP synthetase family.

The protein operates within secondary metabolite biosynthesis. Nonribosomal peptide synthetase; part of the gene cluster that mediates the biosynthesis of malformins, cyclic pentapeptides with a disulfide bond between 2 consecutive cysteins, that show potential anti-tumor as well as antimalarial and antitrypanosomal properties. The nonribosomal peptide synthetase mlfA is responsible of the formation of the cyclic pentapeptide. The malformin biosynthesis clusters in malformin-producing fungi also contain enzymes involved in the formation of the disulfide bond between the two consecutive cysteins within malformins, in addition to additional tailoring enzymes such as methyltransferases or oxidoreductases. They are also composed of up to 4 major facilitator superfamily transporters, and transcription factors probably involved in the regulation of the expression of those clusters. The sequence is that of Malformin synthetase mlfA from Aspergillus niger (strain ATCC MYA-4892 / CBS 513.88 / FGSC A1513).